The sequence spans 428 residues: Enolase (428 aa).

Position 163 (Q163) interacts with (2R)-2-phosphoglycerate. E205 (proton donor) is an active-site residue. The Mg(2+) site is built by D242, E285, and D312. K337, R366, S367, and K388 together coordinate (2R)-2-phosphoglycerate. K337 acts as the Proton acceptor in catalysis.

It belongs to the enolase family. Mg(2+) is required as a cofactor.

The protein localises to the cytoplasm. The protein resides in the secreted. Its subcellular location is the cell surface. It catalyses the reaction (2R)-2-phosphoglycerate = phosphoenolpyruvate + H2O. Its pathway is carbohydrate degradation; glycolysis; pyruvate from D-glyceraldehyde 3-phosphate: step 4/5. In terms of biological role, catalyzes the reversible conversion of 2-phosphoglycerate (2-PG) into phosphoenolpyruvate (PEP). It is essential for the degradation of carbohydrates via glycolysis. The polypeptide is Enolase (Persephonella marina (strain DSM 14350 / EX-H1)).